Consider the following 174-residue polypeptide: Shikimate kinase 2 (174 aa).

Residue 12-17 (GCGKTT) coordinates ATP. Thr-16 and Asp-32 together coordinate Mg(2+). Asp-34, Arg-58, and Gly-79 together coordinate substrate. The segment at 112-126 (EAFPEEGQRPTLTGK) is LID domain. Residue Arg-120 coordinates ATP. Arg-139 is a binding site for substrate. ATP is bound at residue Gln-155.

It belongs to the shikimate kinase family. AroL subfamily. In terms of assembly, monomer. The cofactor is Mg(2+).

The protein localises to the cytoplasm. The catalysed reaction is shikimate + ATP = 3-phosphoshikimate + ADP + H(+). It functions in the pathway metabolic intermediate biosynthesis; chorismate biosynthesis; chorismate from D-erythrose 4-phosphate and phosphoenolpyruvate: step 5/7. Catalyzes the specific phosphorylation of the 3-hydroxyl group of shikimic acid using ATP as a cosubstrate. The polypeptide is Shikimate kinase 2 (Enterobacter sp. (strain 638)).